A 368-amino-acid polypeptide reads, in one-letter code: Probable endopolygalacturonase I (368 aa).

A signal peptide spans 1 to 18; it reads MHSFQLLGLAALGSLVAA. Residues 19–31 constitute a propeptide that is removed on maturation; the sequence is APSPSRVSDLTER. Cys-35 and Cys-50 form a disulfide bridge. PbH1 repeat units follow at residues 162 to 192, 193 to 214, 215 to 235, 244 to 265, 273 to 295, and 307 to 328; these read ANNLHLTDITIDNSDGDSKGGHNTDGFDISE, SNGVYISGANVKNQDDCIAINS, GKNIEFTGGTCSGGHGLSIGS, VQGVKITDSTVTNSDNGIRIKT, VSDVTYSNIKLSGIHKKGIVIQQ, and SNGIPIKDVTVDGITGSVDSKA. The Proton donor role is filled by Asp-207. A disulfide bridge connects residues Cys-209 and Cys-225. The active site involves His-229. 2 disulfide bridges follow: Cys-335-Cys-340 and Cys-359-Cys-368.

The protein belongs to the glycosyl hydrolase 28 family.

Its subcellular location is the secreted. The catalysed reaction is (1,4-alpha-D-galacturonosyl)n+m + H2O = (1,4-alpha-D-galacturonosyl)n + (1,4-alpha-D-galacturonosyl)m.. Functionally, involved in maceration and soft-rotting of plant tissue. Hydrolyzes the 1,4-alpha glycosidic bonds of de-esterified pectate in the smooth region of the plant cell wall. This chain is Probable endopolygalacturonase I (pgaI), found in Aspergillus terreus (strain NIH 2624 / FGSC A1156).